A 377-amino-acid chain; its full sequence is Protein-glutamate methylesterase/protein-glutamine glutaminase 1 (377 aa).

The region spanning 4 to 121 (KVLVVDDSSF…ARNRDEAVTL (118 aa)) is the Response regulatory domain. Asp55 bears the 4-aspartylphosphate mark. Positions 138 to 170 (RPAAPRPAPTTSIAASSSLSQERAAATSPLGNR) are disordered. Low complexity predominate over residues 146-157 (PTTSIAASSSLS). Residues 184–377 (SGKKYQLTAI…ERMLVEVGLA (194 aa)) enclose the CheB-type methylesterase domain. Catalysis depends on residues Ser196, His223, and Asp319.

The protein belongs to the CheB family. Phosphorylated by CheA. Phosphorylation of the N-terminal regulatory domain activates the methylesterase activity.

The protein localises to the cytoplasm. It catalyses the reaction [protein]-L-glutamate 5-O-methyl ester + H2O = L-glutamyl-[protein] + methanol + H(+). The enzyme catalyses L-glutaminyl-[protein] + H2O = L-glutamyl-[protein] + NH4(+). Functionally, involved in chemotaxis. Part of a chemotaxis signal transduction system that modulates chemotaxis in response to various stimuli. Catalyzes the demethylation of specific methylglutamate residues introduced into the chemoreceptors (methyl-accepting chemotaxis proteins or MCP) by CheR. Also mediates the irreversible deamidation of specific glutamine residues to glutamic acid. The sequence is that of Protein-glutamate methylesterase/protein-glutamine glutaminase 1 from Vibrio cholerae serotype O1 (strain ATCC 39315 / El Tor Inaba N16961).